A 428-amino-acid chain; its full sequence is Serine--tRNA ligase (428 aa).

L-serine is bound at residue 231-233; sequence TSE. ATP contacts are provided by residues 262–264 and valine 278; that span reads RRE. Residue glutamate 285 participates in L-serine binding. 349–352 provides a ligand contact to ATP; sequence ELTS. Threonine 384 serves as a coordination point for L-serine.

It belongs to the class-II aminoacyl-tRNA synthetase family. Type-1 seryl-tRNA synthetase subfamily. As to quaternary structure, homodimer. The tRNA molecule binds across the dimer.

Its subcellular location is the cytoplasm. It catalyses the reaction tRNA(Ser) + L-serine + ATP = L-seryl-tRNA(Ser) + AMP + diphosphate + H(+). It carries out the reaction tRNA(Sec) + L-serine + ATP = L-seryl-tRNA(Sec) + AMP + diphosphate + H(+). The protein operates within aminoacyl-tRNA biosynthesis; selenocysteinyl-tRNA(Sec) biosynthesis; L-seryl-tRNA(Sec) from L-serine and tRNA(Sec): step 1/1. In terms of biological role, catalyzes the attachment of serine to tRNA(Ser). Is also able to aminoacylate tRNA(Sec) with serine, to form the misacylated tRNA L-seryl-tRNA(Sec), which will be further converted into selenocysteinyl-tRNA(Sec). The sequence is that of Serine--tRNA ligase from Bifidobacterium longum subsp. infantis (strain ATCC 15697 / DSM 20088 / JCM 1222 / NCTC 11817 / S12).